The following is a 119-amino-acid chain: Large ribosomal subunit protein bL20 (119 aa).

It belongs to the bacterial ribosomal protein bL20 family.

Functionally, binds directly to 23S ribosomal RNA and is necessary for the in vitro assembly process of the 50S ribosomal subunit. It is not involved in the protein synthesizing functions of that subunit. This Xylella fastidiosa (strain 9a5c) protein is Large ribosomal subunit protein bL20.